A 277-amino-acid chain; its full sequence is Phosphonates import ATP-binding protein PhnC 2 (277 aa).

Positions 5–253 constitute an ABC transporter domain; the sequence is IHVQGLNKTF…FLNDLYGADA (249 aa). An ATP-binding site is contributed by 37–44; it reads GASGSGKS.

This sequence belongs to the ABC transporter superfamily. Phosphonates importer (TC 3.A.1.9.1) family. The complex is composed of two ATP-binding proteins (PhnC), two transmembrane proteins (PhnE) and a solute-binding protein (PhnD).

It localises to the cell inner membrane. The catalysed reaction is phosphonate(out) + ATP + H2O = phosphonate(in) + ADP + phosphate + H(+). Its function is as follows. Part of the ABC transporter complex PhnCDE involved in phosphonates import. Responsible for energy coupling to the transport system. This chain is Phosphonates import ATP-binding protein PhnC 2, found in Pseudomonas savastanoi pv. phaseolicola (strain 1448A / Race 6) (Pseudomonas syringae pv. phaseolicola (strain 1448A / Race 6)).